The chain runs to 91 residues: Acyl carrier protein (91 aa).

The Carrier domain occupies 4 to 79 (QQILDKVQSI…QAVDYILQHK (76 aa)). O-(pantetheine 4'-phosphoryl)serine is present on serine 39.

It belongs to the acyl carrier protein (ACP) family. 4'-phosphopantetheine is transferred from CoA to a specific serine of apo-ACP by AcpS. This modification is essential for activity because fatty acids are bound in thioester linkage to the sulfhydryl of the prosthetic group.

It localises to the plastid. Its subcellular location is the chloroplast. It functions in the pathway lipid metabolism; fatty acid biosynthesis. Its function is as follows. Carrier of the growing fatty acid chain in fatty acid biosynthesis. In Cyanidioschyzon merolae (strain NIES-3377 / 10D) (Unicellular red alga), this protein is Acyl carrier protein.